Reading from the N-terminus, the 142-residue chain is Hemoglobin subunit alpha 1 (142 aa).

Ser-1 is subject to N-acetylserine. Positions 1-142 (SLSDKDKAAV…VSLALSERYR (142 aa)) constitute a Globin domain. His-59 is an O2 binding site. His-88 is a binding site for heme b.

Belongs to the globin family. Hb1 is a heterotetramer of two alpha-1 chains and two beta-1 chains. Hb2 is a heterotetramer of two alpha-2 chains and two beta-1 chains. HbC is a heterotetramer of two alpha-1 chains and two beta-2 chains. Red blood cells.

In terms of biological role, involved in oxygen transport from gills to the various peripheral tissues. This chain is Hemoglobin subunit alpha 1, found in Eleginops maclovinus (Patagonian blennie).